The chain runs to 235 residues: Large ribosomal subunit protein uL2 (235 aa).

The disordered stretch occupies residues 197 to 218 (VAMNPVDHPHGGGEGKTSGGRH).

The protein belongs to the universal ribosomal protein uL2 family. In terms of assembly, part of the 50S ribosomal subunit. Forms a bridge to the 30S subunit in the 70S ribosome.

In terms of biological role, one of the primary rRNA binding proteins. Required for association of the 30S and 50S subunits to form the 70S ribosome, for tRNA binding and peptide bond formation. It has been suggested to have peptidyltransferase activity; this is somewhat controversial. Makes several contacts with the 16S rRNA in the 70S ribosome. The chain is Large ribosomal subunit protein uL2 (rplB) from Carsonella ruddii (strain PV).